The chain runs to 556 residues: 2-succinyl-5-enolpyruvyl-6-hydroxy-3-cyclohexene-1-carboxylate synthase (556 aa).

This sequence belongs to the TPP enzyme family. MenD subfamily. In terms of assembly, homodimer. Mg(2+) is required as a cofactor. Requires Mn(2+) as cofactor. It depends on thiamine diphosphate as a cofactor.

It carries out the reaction isochorismate + 2-oxoglutarate + H(+) = 5-enolpyruvoyl-6-hydroxy-2-succinyl-cyclohex-3-ene-1-carboxylate + CO2. It functions in the pathway quinol/quinone metabolism; 1,4-dihydroxy-2-naphthoate biosynthesis; 1,4-dihydroxy-2-naphthoate from chorismate: step 2/7. The protein operates within quinol/quinone metabolism; menaquinone biosynthesis. Its function is as follows. Catalyzes the thiamine diphosphate-dependent decarboxylation of 2-oxoglutarate and the subsequent addition of the resulting succinic semialdehyde-thiamine pyrophosphate anion to isochorismate to yield 2-succinyl-5-enolpyruvyl-6-hydroxy-3-cyclohexene-1-carboxylate (SEPHCHC). The chain is 2-succinyl-5-enolpyruvyl-6-hydroxy-3-cyclohexene-1-carboxylate synthase from Escherichia coli O7:K1 (strain IAI39 / ExPEC).